Here is a 237-residue protein sequence, read N- to C-terminus: tRNA (guanine-N(7)-)-methyltransferase (237 aa).

The tract at residues 1–24 is disordered; it reads MTAHKPGDPTTLNRLYGRSKGKPL. 4 residues coordinate S-adenosyl-L-methionine: Glu62, Glu87, Asp119, and Asp141. Residue Asp141 is part of the active site. Substrate contacts are provided by residues Lys145, Asp177, and 216-219; that span reads TRYE.

It belongs to the class I-like SAM-binding methyltransferase superfamily. TrmB family.

It catalyses the reaction guanosine(46) in tRNA + S-adenosyl-L-methionine = N(7)-methylguanosine(46) in tRNA + S-adenosyl-L-homocysteine. The protein operates within tRNA modification; N(7)-methylguanine-tRNA biosynthesis. In terms of biological role, catalyzes the formation of N(7)-methylguanine at position 46 (m7G46) in tRNA. The sequence is that of tRNA (guanine-N(7)-)-methyltransferase from Sphingopyxis alaskensis (strain DSM 13593 / LMG 18877 / RB2256) (Sphingomonas alaskensis).